A 219-amino-acid chain; its full sequence is Sporamin A (219 aa).

The signal sequence occupies residues 1–23 (MKALTLALFLALSLYLLPNPAHS).

The protein belongs to the protease inhibitor I3 (leguminous Kunitz-type inhibitor) family. Accumulates specifically in tuberous roots and tubers upon tuberization. Sporamin accounts 60 to 80% of the total soluble protein of the organ.

Its subcellular location is the vacuole. Its function is as follows. Major tuberous root protein. The protein is Sporamin A (GSPO-A1) of Ipomoea batatas (Sweet potato).